We begin with the raw amino-acid sequence, 259 residues long: BTB/POZ domain-containing protein KCTD4 (259 aa).

Residues 1 to 22 are disordered; that stretch reads MEHKINRREKEKDYEGKHNSLE. Positions 33 to 134 constitute a BTB domain; that stretch reads TLMTLNVGGY…EVKSRWEKEQ (102 aa).

The chain is BTB/POZ domain-containing protein KCTD4 (KCTD4) from Bos taurus (Bovine).